Here is a 564-residue protein sequence, read N- to C-terminus: Potassium-transporting ATPase potassium-binding subunit (564 aa).

10 helical membrane passes run 4–24, 67–87, 135–155, 179–199, 258–278, 286–306, 382–402, 420–440, 487–507, and 528–548; these read YDYW…PFLG, TLAL…ILLF, VGLT…LVAL, LYGL…QGVP, FEVA…GHYV, AIIG…LWAE, AGLY…GLMI, LLVV…AIAA, LMLG…VLAL, and GPLF…LTFL.

This sequence belongs to the KdpA family. The system is composed of three essential subunits: KdpA, KdpB and KdpC.

Its subcellular location is the cell inner membrane. In terms of biological role, part of the high-affinity ATP-driven potassium transport (or Kdp) system, which catalyzes the hydrolysis of ATP coupled with the electrogenic transport of potassium into the cytoplasm. This subunit binds the periplasmic potassium ions and delivers the ions to the membrane domain of KdpB through an intramembrane tunnel. In Pseudomonas fluorescens (strain Pf0-1), this protein is Potassium-transporting ATPase potassium-binding subunit.